A 365-amino-acid polypeptide reads, in one-letter code: Peptidyl-prolyl cis-trans isomerase FKBP42 (365 aa).

A compositionally biased stretch (basic and acidic residues) spans 1–15 (MDESLEHQTQTHDQE). A disordered region spans residues 1–44 (MDESLEHQTQTHDQESEIVTEGSAVVHSEPSQEGNVPPKVDSEA). The interaction with MDR1/PGP1 stretch occupies residues 1 to 163 (MDESLEHQTQ…EVIGFDETKE (163 aa)). One can recognise a PPIase FKBP-type domain in the interval 67 to 159 (YSTCFLHYRA…LYEVEVIGFD (93 aa)). The interaction with MRP1 stretch occupies residues 163-337 (EGKARSDMTV…GKDEGGAKSK (175 aa)). 3 TPR repeats span residues 179–212 (ADRRKMDGNSLFKEEKLEEAMQQYEMAIAYMGDD), 230–263 (NPCHLNIAACLIKLKRYDEAIGHCNIVLTEEEKN), and 264–297 (PKALFRRGKAKAELGQMDSARDDFRKAQKYAPDD). Residues 310-326 (QEKALYQKQKEMYKGIF) form a calmodulin-binding region. The chain crosses the membrane as a helical; Anchor for type IV membrane protein span at residues 338–357 (SLFWLIVLWQWFVSLFSRIF).

This sequence belongs to the FKBP-type PPIase family. As to quaternary structure, interacts with calmodulin (CaM), MRP1, MRP2, MDR1/PGP1, MDR11/PGP19 and SHD/HSP90. Interacts with 1-naphthylphthalamic acid (NPA).

It localises to the cell membrane. The protein resides in the vacuole membrane. The protein localises to the endoplasmic reticulum. The catalysed reaction is [protein]-peptidylproline (omega=180) = [protein]-peptidylproline (omega=0). PPIases accelerate the folding of proteins. It catalyzes the cis-trans isomerization of proline imidic peptide bonds in oligopeptides. Modulates the uptake of MRP substrates into the vacuole; reduces metolachlor-GS (MOC-GS) and enhances 17-beta-estradiol 17-(beta-D-glucuronide) (E(2)17betaG) uptake. Regulates cell elongation and orientation. Functions as a positive regulator of PGP1-mediated auxin transport. Confers drug modulation of PGP1 efflux activity as interaction with NPA or flavonol quercetin prevents its physical and functional interaction with PGP1. Required for the proper localization of auxin-related ABCB transporters. Plays a role in brassinosteroid (BR) signaling pathway. Required for seed development by promoting stamen elongation and, to a lesser extent, anther dehiscence and pollen maturation, probably as a chaperone helping ABCB1 and ABCB19 auxin transporters localization and activation. Involved in auxin signaling in nectaries to promote starch accumulation to attract visiting pollinators. The polypeptide is Peptidyl-prolyl cis-trans isomerase FKBP42 (Arabidopsis thaliana (Mouse-ear cress)).